Consider the following 215-residue polypeptide: Probable septum site-determining protein MinC (215 aa).

This sequence belongs to the MinC family. As to quaternary structure, interacts with MinD and FtsZ.

Its function is as follows. Cell division inhibitor that blocks the formation of polar Z ring septums. Rapidly oscillates between the poles of the cell to destabilize FtsZ filaments that have formed before they mature into polar Z rings. Prevents FtsZ polymerization. In Clostridium botulinum (strain Alaska E43 / Type E3), this protein is Probable septum site-determining protein MinC.